The following is a 268-amino-acid chain: Hemolysin C (268 aa).

CBS domains follow at residues 52-111 (MVPR…NFSL) and 114-171 (ILHK…IRDE).

Belongs to the UPF0053 family.

Its function is as follows. Bacterial hemolysins are exotoxins that attack blood cell membranes and cause cell rupture by mechanisms not clearly defined. The protein is Hemolysin C (tlyC) of Brachyspira hyodysenteriae (Treponema hyodysenteriae).